The chain runs to 85 residues: UPF0291 protein str0508 (85 aa).

The segment at 62 to 85 (TPEKLRQVQREKGLHGRSLDDPES) is disordered.

The protein belongs to the UPF0291 family.

The protein localises to the cytoplasm. In Streptococcus thermophilus (strain CNRZ 1066), this protein is UPF0291 protein str0508.